Here is a 397-residue protein sequence, read N- to C-terminus: Odorant receptor 22a (397 aa).

Residues 1 to 49 (MLSKFFPHIKEKPLSERVKSRDAFIYLDRVMWSFGWTEPENKRWILPYK) lie on the Cytoplasmic side of the membrane. The helical transmembrane segment at 50–70 (LWLAFVNIVMLILLPISISIE) threads the bilayer. The Extracellular portion of the chain corresponds to 71–86 (YLHRFKTFSAGEFLSS). A helical membrane pass occupies residues 87-107 (LEIGVNMYGSSFKCAFTLIGF). At 108–136 (KKRQEAKVLLDQLDKRCLSDKERSTVHRY) the chain is on the cytoplasmic side. The chain crosses the membrane as a helical span at residues 137-157 (VAMGNFFDILYHIFYSTFVVM). Topologically, residues 158-182 (NFPYFLLERRHAWRMYFPYIDSDEQ) are extracellular. The chain crosses the membrane as a helical span at residues 183 to 203 (FYISSIAECFLMTEAIYMDLC). Residues 204–263 (TDVCPLISMLMARCHISLLKQRLRNLRSKPGRTEDEYLEELTECIRDHRLLLDYVDALRP) lie on the Cytoplasmic side of the membrane. Residues 264–280 (VFSGTIFVQFLLIGTVL) traverse the membrane as a helical segment. At 281–286 (GLSMIN) the chain is on the extracellular side. Residues 287 to 304 (LMFFSTFWTGVATCLFMF) form a helical membrane-spanning segment. The Cytoplasmic portion of the chain corresponds to 305 to 356 (DVSMETFPFCYLCNMIIDDCQEMSNCLFQSDWTSADRRYKSTLVYFLHNLQQ). Residues 357 to 377 (PITLTAGGVFPISMQTNLAMV) traverse the membrane as a helical segment. Topologically, residues 378 to 397 (KLAFSVVTVIKQFNLAERFQ) are extracellular.

It belongs to the insect chemoreceptor superfamily. Heteromeric odorant receptor channel (TC 1.A.69) family. Or2a subfamily. As to quaternary structure, interacts with Orco, via conserved C-terminal cytoplasmic loops. Complexes exist early in the endomembrane system in olfactory sensory neurons (OSNs), coupling these complexes to the conserved ciliary trafficking pathway. Interacts with snmp1. Expressed with Orco in 17-20 sensory neurons on the medial-proximal edge of the antenna. Expressed in the ab3A neuron which responds to ethyl butyrate.

The protein localises to the cell membrane. In terms of biological role, odorant receptor which mediates acceptance or avoidance behavior, depending on its substrates. The odorant receptor repertoire encodes a large collection of odor stimuli that vary widely in identity, intensity, and duration. Involved in the behavioral responses ethyl butyrate and to esters in more general. Complexes with Orco to form odorant-sensing units, providing sensitive and prolonged odorant signaling and calcium permeability. They are necessary and sufficient to promote functional reconstitution of odor-evoked signaling in sensory neurons that normally respond only to carbon dioxide. This is Odorant receptor 22a (Or22a) from Drosophila melanogaster (Fruit fly).